Consider the following 100-residue polypeptide: Urease subunit gamma (100 aa).

This sequence belongs to the urease gamma subunit family. Heterotrimer of UreA (gamma), UreB (beta) and UreC (alpha) subunits. Three heterotrimers associate to form the active enzyme.

The protein localises to the cytoplasm. It catalyses the reaction urea + 2 H2O + H(+) = hydrogencarbonate + 2 NH4(+). Its pathway is nitrogen metabolism; urea degradation; CO(2) and NH(3) from urea (urease route): step 1/1. The chain is Urease subunit gamma from Picosynechococcus sp. (strain ATCC 27264 / PCC 7002 / PR-6) (Agmenellum quadruplicatum).